The chain runs to 503 residues: Maturase K (503 aa).

The protein belongs to the intron maturase 2 family. MatK subfamily.

The protein resides in the plastid. It is found in the chloroplast. In terms of biological role, usually encoded in the trnK tRNA gene intron. Probably assists in splicing its own and other chloroplast group II introns. In Panax quinquefolius (American ginseng), this protein is Maturase K.